The primary structure comprises 117 residues: Large ribosomal subunit protein bL20 (117 aa).

This sequence belongs to the bacterial ribosomal protein bL20 family.

In terms of biological role, binds directly to 23S ribosomal RNA and is necessary for the in vitro assembly process of the 50S ribosomal subunit. It is not involved in the protein synthesizing functions of that subunit. This Leptospira interrogans serogroup Icterohaemorrhagiae serovar copenhageni (strain Fiocruz L1-130) protein is Large ribosomal subunit protein bL20.